Consider the following 168-residue polypeptide: Cell division inhibitor SulA (168 aa).

The ftsZ binding stretch occupies residues 106–112 (ALLTGNY). Residues 161-168 (KIHSSLYH) form a lon protease binding region.

Belongs to the SulA family. In terms of assembly, interacts with FtsZ. Post-translationally, is rapidly cleaved and degraded by the Lon protease once DNA damage is repaired.

Its function is as follows. Component of the SOS system and an inhibitor of cell division. Accumulation of SulA causes rapid cessation of cell division and the appearance of long, non-septate filaments. In the presence of GTP, binds a polymerization-competent form of FtsZ in a 1:1 ratio, thus inhibiting FtsZ polymerization and therefore preventing it from participating in the assembly of the Z ring. This mechanism prevents the premature segregation of damaged DNA to daughter cells during cell division. The sequence is that of Cell division inhibitor SulA from Serratia proteamaculans (strain 568).